The primary structure comprises 103 residues: Histone H4 (103 aa).

Positions 1-14 are enriched in gly residues; that stretch reads MTGRGKGGKGLGKG. Positions 1–20 are disordered; it reads MTGRGKGGKGLGKGGAKRHR. An N6-acetyl-N6-methyllysine; alternate mark is found at Lys6 and Lys13. Residues 17–21 mediate DNA binding; sequence KRHRK.

This sequence belongs to the histone H4 family. As to quaternary structure, the nucleosome is a histone octamer containing two molecules each of H2A, H2B, H3 and H4 assembled in one H3-H4 heterotetramer and two H2A-H2B heterodimers. The octamer wraps approximately 147 bp of DNA.

The protein localises to the nucleus. It is found in the chromosome. In terms of biological role, core component of nucleosome. Nucleosomes wrap and compact DNA into chromatin, limiting DNA accessibility to the cellular machineries which require DNA as a template. Histones thereby play a central role in transcription regulation, DNA repair, DNA replication and chromosomal stability. DNA accessibility is regulated via a complex set of post-translational modifications of histones, also called histone code, and nucleosome remodeling. This is Histone H4 from Diadromus pulchellus (Parasitic wasp).